The sequence spans 490 residues: Cis-aconitate decarboxylase (490 aa).

Belongs to the PrpD family.

The protein resides in the mitochondrion. It catalyses the reaction cis-aconitate + H(+) = itaconate + CO2. Involved in the production of itaconic acid, a soluble unsaturated dicarboxylic acid mainly produced from sugars. In Aspergillus terreus, this protein is Cis-aconitate decarboxylase (cad1).